Consider the following 201-residue polypeptide: Adenylyl-sulfate kinase (201 aa).

35 to 42 serves as a coordination point for ATP; that stretch reads GLSGSGKS. S109 serves as the catalytic Phosphoserine intermediate.

This sequence belongs to the APS kinase family.

It carries out the reaction adenosine 5'-phosphosulfate + ATP = 3'-phosphoadenylyl sulfate + ADP + H(+). It participates in sulfur metabolism; hydrogen sulfide biosynthesis; sulfite from sulfate: step 2/3. Its function is as follows. Catalyzes the synthesis of activated sulfate. This chain is Adenylyl-sulfate kinase, found in Salmonella arizonae (strain ATCC BAA-731 / CDC346-86 / RSK2980).